Here is a 337-residue protein sequence, read N- to C-terminus: D-alanine--D-alanine ligase (337 aa).

Residues 124 to 330 form the ATP-grasp domain; the sequence is KMWFSALGIP…FTEYLSLVIN (207 aa). 154-209 is an ATP binding site; sequence ALAQWGSIFVKAASQGSSVGCYKVDDSAKVAGVLKDAFGYAPYVIVEKTIKARELE. Residues Asp-284, Glu-297, and Asn-299 each contribute to the Mg(2+) site.

The protein belongs to the D-alanine--D-alanine ligase family. The cofactor is Mg(2+). Requires Mn(2+) as cofactor.

Its subcellular location is the cytoplasm. It carries out the reaction 2 D-alanine + ATP = D-alanyl-D-alanine + ADP + phosphate + H(+). The protein operates within cell wall biogenesis; peptidoglycan biosynthesis. In terms of biological role, cell wall formation. This Shewanella baltica (strain OS223) protein is D-alanine--D-alanine ligase.